A 123-amino-acid polypeptide reads, in one-letter code: Small ribosomal subunit protein uS12 (123 aa).

3-methylthioaspartic acid is present on D89.

This sequence belongs to the universal ribosomal protein uS12 family. In terms of assembly, part of the 30S ribosomal subunit. Contacts proteins S8 and S17. May interact with IF1 in the 30S initiation complex.

With S4 and S5 plays an important role in translational accuracy. Its function is as follows. Interacts with and stabilizes bases of the 16S rRNA that are involved in tRNA selection in the A site and with the mRNA backbone. Located at the interface of the 30S and 50S subunits, it traverses the body of the 30S subunit contacting proteins on the other side and probably holding the rRNA structure together. The combined cluster of proteins S8, S12 and S17 appears to hold together the shoulder and platform of the 30S subunit. This is Small ribosomal subunit protein uS12 from Rhodopseudomonas palustris (strain BisA53).